The primary structure comprises 579 residues: MSAANPETPNSTISREASTQSSSAAASQGWVLPEGKIVPNTVFVGGIDARMDETEIGSCFGRYGSVKEVKIITNRTGVSKGYGFVSFVNDVDVQKIVGSQIHFHGKKLKLGPAIRKQKLCARHVQPRPLVVNPPPPPQFQNVWRNPNTETYLQPQITPNPVTQHVQSAANPETPNSTISREASTQSSSAAASQGWVLPEGKIVPNTVFVGGIDARMDETEIGSCFGRYGSVKEVKIITNRTGVSKGYGFVSFVNDVDVQKIVGSQIHFHGKKLKLGPAIRKQKLCARHVQPRPLVVNPPPPPQFQNVWRNPNTETYLQPQITPNPVTQHVQAYSAYPHSPGQVITGCQLLVYNYQEYPTYPDSAFQVTTGYQLPVYNYQPFPAYPRSPFQVTAGYQLPVYNYQAFPAYPNSPFQVATGYQFPVYNYQPFPAYPSSPFQVTAGYQLPVYNYQAFPAYPNSPFQVATGYQFPVYNYQAFPAYPNSPVQVTTGYQLPVYNYQAFPAYPSSPFQVTTGYQLPVYNYQAFPAYPNSAVQVTTGYQFHVYNYQMPPQCPVGEQRRNLWTEAYKWWYLVCLIQRRD.

Over residues M1–N10 the composition is skewed to polar residues. The tract at residues M1–S27 is disordered. Low complexity predominate over residues S11–S27. Positions N40 to R115 constitute an RRM 1 domain. Over residues Q163–N175 the composition is skewed to polar residues. Positions Q163–S192 are disordered. Residues S176–S192 show a composition bias toward low complexity. The RRM 2 domain maps to N205–R280. DAZ domains follow at residues A332–Q355, E356–Q379, P380–Q403, A404–Q427, P428–Q451, A452–Q475, A476–Q499, A500–Q523, and A524–Q547.

This sequence belongs to the RRM DAZ family. In terms of assembly, forms a heterodimer with BOLL and DAZL. Interacts with PUM2, DAZAP1, DAZAP2, DZIP1 and DZIP3. In terms of tissue distribution, testis-specific. Expression restricted to premeiotic germ cells, particularly in spermatogonia (at protein level).

It localises to the cytoplasm. Its subcellular location is the nucleus. In terms of biological role, RNA-binding protein that plays an essential role in spermatogenesis. May act by binding to the 3'-UTR of mRNAs and regulating their translation. In Homo sapiens (Human), this protein is Deleted in azoospermia protein 4 (DAZ4).